The following is a 230-amino-acid chain: MTEDDRIKLEPSWKHALRDQFEQPYMAQLREFLRQEHAAGKEIYPPGPLIFNALNSTPLDKVKVVILGQDPYHGPGQAHGLCFSVQPGVPAPPSLVNIYKELKRDLNIDIPNHGYLQSWADQGVLMLNTTMTVERANANAHAGKGWQFFTDRIIEVVSEHQPHLVFLLWGAHAQGKQKLIDATKHLVLTSVHPSPLSAYRGFLGCGHFSRTNKFLEQNGETPINWVLPPA.

Catalysis depends on Asp-70, which acts as the Proton acceptor.

It belongs to the uracil-DNA glycosylase (UDG) superfamily. UNG family.

The protein localises to the cytoplasm. It catalyses the reaction Hydrolyzes single-stranded DNA or mismatched double-stranded DNA and polynucleotides, releasing free uracil.. Its function is as follows. Excises uracil residues from the DNA which can arise as a result of misincorporation of dUMP residues by DNA polymerase or due to deamination of cytosine. The chain is Uracil-DNA glycosylase from Pseudomonas fluorescens (strain SBW25).